The chain runs to 1304 residues: DNA-directed RNA polymerase subunit beta' (1304 aa).

Zn(2+) contacts are provided by C60, C62, C75, and C78. Positions 541, 543, and 545 each coordinate Mg(2+). The Zn(2+) site is built by C887, C963, C970, and C973.

It belongs to the RNA polymerase beta' chain family. As to quaternary structure, the RNAP catalytic core consists of 2 alpha, 1 beta, 1 beta' and 1 omega subunit. When a sigma factor is associated with the core the holoenzyme is formed, which can initiate transcription. It depends on Mg(2+) as a cofactor. Requires Zn(2+) as cofactor.

The catalysed reaction is RNA(n) + a ribonucleoside 5'-triphosphate = RNA(n+1) + diphosphate. In terms of biological role, DNA-dependent RNA polymerase catalyzes the transcription of DNA into RNA using the four ribonucleoside triphosphates as substrates. The polypeptide is DNA-directed RNA polymerase subunit beta' (Acidothermus cellulolyticus (strain ATCC 43068 / DSM 8971 / 11B)).